A 143-amino-acid polypeptide reads, in one-letter code: Protein SLC31A2 (143 aa).

The Extracellular portion of the chain corresponds to 1-22 (MPMHFIFSDEAVLLFDFWRVHS). Residues 23–43 (PTGMALSVLVVLLLAVLYEGI) form a helical membrane-spanning segment. Topologically, residues 44–93 (KVGKAKLLHKTLESLPATNSQQFILGPDQDSTGSRSTSDNRTRLRWFLCY) are cytoplasmic. T75 is subject to Phosphothreonine. Phosphoserine is present on S77. A helical transmembrane segment spans residues 94–114 (FGQSLVHVIQVVIGYFVMLAV). The Extracellular segment spans residues 115–119 (MSYNT). Residues 120 to 140 (WIFLGVVLGSAVGYYLAYPLL) form a helical membrane-spanning segment. The Cytoplasmic segment spans residues 141–143 (NMT).

It belongs to the copper transporter (Ctr) (TC 1.A.56) family. SLC31A subfamily. As to quaternary structure, oligomer. Interacts with SLC31A1; this interaction stabilizes SLC31A2 and protects it from ubiquitination and the subsequent degradation. Ubiquitinated; ubiquitination and the subsequent proteasomal degradation are prevent by SLC31A1 that stabilizes it.

It localises to the membrane. The protein resides in the cytoplasmic vesicle membrane. It is found in the late endosome membrane. Its subcellular location is the lysosome membrane. The protein localises to the recycling endosome membrane. Its function is as follows. Does not function as a copper(1+) importer in vivo. However, in vitro functions as a low-affinity copper(1+) importer. Regulator of SLC31A1 which facilitates the cleavage of the SLC31A1 ecto-domain or which stabilizes the truncated form of SLC31A1 (Truncated CTR1 form), thereby drives the SLC31A1 truncated form-dependent endosomal copper export and modulates the copper and cisplatin accumulation via SLC31A1. This chain is Protein SLC31A2, found in Mus musculus (Mouse).